The sequence spans 550 residues: MTPADLAELLKTTAIVVLAERGLDAAALPQTVTVERPRNPEHGDYSSNLAMQLGKKVGANPLELAGWLAEVLAQAGGIADVEVAGPGFINMRLDASAQAMIVNTVINADKNFGHSDDLAGYQINLEFVSANPTGPIHIGGTRWAAVGDALGRLLSTQGAAVVREYYFNDHGAQIDRFTNSLIAAAKGELTPADGYAGTYVTDIAAQVMQQAPYALSLPESEMHETVREIGVDLMFTHIKKSLHEFGTDFDVYTHEDSMHASGRVDEAIARLRDTGNVYEKDGALWLRTSAFGDDKDRVVIKSDGKPAYIAGDLAYYLDKRQRGFDLCIYMLGADHHGYIARLKAAAAAFGDDPAIVEVLIGQMVNLVCDGQLVRMSKRSGNVITLDDLVEAIGVDAARYSLIRSSVDTPIDIDLALWSSSSNENPVYYVQYAHARLSALARNAAEFGLIPDTGHLELLSHDKEGALLRTVGEFPQVLKTAAALREPHRVCRYLEDLAGDYHRFYDSCRVLPQGDEKPTDLHTARLALCQANRQVIANGLAILGVSAPERM.

The 'HIGH' region motif lies at alanine 130–glycine 140.

Belongs to the class-I aminoacyl-tRNA synthetase family. In terms of assembly, monomer.

It localises to the cytoplasm. The catalysed reaction is tRNA(Arg) + L-arginine + ATP = L-arginyl-tRNA(Arg) + AMP + diphosphate. This is Arginine--tRNA ligase (argS) from Mycobacterium leprae (strain TN).